The sequence spans 305 residues: UDP-N-acetylenolpyruvoylglucosamine reductase (305 aa).

An FAD-binding PCMH-type domain is found at G37–K202. The active site involves R183.

It belongs to the MurB family. It depends on FAD as a cofactor.

The protein localises to the cytoplasm. It catalyses the reaction UDP-N-acetyl-alpha-D-muramate + NADP(+) = UDP-N-acetyl-3-O-(1-carboxyvinyl)-alpha-D-glucosamine + NADPH + H(+). The protein operates within cell wall biogenesis; peptidoglycan biosynthesis. Its function is as follows. Cell wall formation. The protein is UDP-N-acetylenolpyruvoylglucosamine reductase of Rhodopirellula baltica (strain DSM 10527 / NCIMB 13988 / SH1).